A 142-amino-acid chain; its full sequence is Large ribosomal subunit protein uL13 (142 aa).

It belongs to the universal ribosomal protein uL13 family. Part of the 50S ribosomal subunit.

Functionally, this protein is one of the early assembly proteins of the 50S ribosomal subunit, although it is not seen to bind rRNA by itself. It is important during the early stages of 50S assembly. In Shewanella amazonensis (strain ATCC BAA-1098 / SB2B), this protein is Large ribosomal subunit protein uL13.